A 784-amino-acid polypeptide reads, in one-letter code: LPS-assembly protein LptD (784 aa).

The first 24 residues, 1 to 24 (MKKRIPTLLATMIATALYSQQGLA), serve as a signal peptide directing secretion. 2 disulfides stabilise this stretch: C31–C724 and C173–C725.

It belongs to the LptD family. As to quaternary structure, component of the lipopolysaccharide transport and assembly complex. Interacts with LptE and LptA. May interact with LptE during assembly of LptD by the beta-barrel assembly machine (BAM). Also interacts with LptM, which promotes the efficient assembly of the LptDE translocon by the BAM complex. Post-translationally, contains two intramolecular disulfide bonds. At least one disulfide bond is required for activity, and protein is probably fully oxidized in vivo.

It localises to the cell outer membrane. Together with LptE, is involved in the assembly of lipopolysaccharide (LPS) at the surface of the outer membrane. Contributes to n-hexane resistance. In Escherichia coli (strain K12), this protein is LPS-assembly protein LptD.